Here is a 477-residue protein sequence, read N- to C-terminus: Angiotensinogen (477 aa).

Positions 1 to 24 are cleaved as a signal peptide; sequence MTPTGAGLKATIFCILTWVSLTAG. Residues Cys-42 and Cys-161 are joined by a disulfide bond. Residues Asn-295 and Asn-319 are each glycosylated (N-linked (GlcNAc...) asparagine).

The protein belongs to the serpin family. Post-translationally, in response to low blood pressure, the enzyme renin/REN cleaves angiotensinogen to produce angiotensin-1. Angiotensin-1 is a substrate of ACE (angiotensin converting enzyme) that removes a dipeptide to yield the physiologically active peptide angiotensin-2. Angiotensin-1 and angiotensin-2 can be further processed to generate angiotensin-3, angiotensin-4. Angiotensin 1-9 is cleaved from angiotensin-1 by ACE2 and can be further processed by ACE to produce angiotensin 1-7, angiotensin 1-5 and angiotensin 1-4. Angiotensin 1-7 has also been proposed to be cleaved from angiotensin-2 by ACE2 or from angiotensin-1 by MME (neprilysin). In terms of processing, the disulfide bond is labile. Angiotensinogen is present in the circulation in a near 40:60 ratio with the oxidized disulfide-bonded form, which preferentially interacts with receptor-bound renin.

The protein resides in the secreted. In terms of biological role, essential component of the renin-angiotensin system (RAS), a potent regulator of blood pressure, body fluid and electrolyte homeostasis. Functionally, acts directly on vascular smooth muscle as a potent vasoconstrictor, affects cardiac contractility and heart rate through its action on the sympathetic nervous system, and alters renal sodium and water absorption through its ability to stimulate the zona glomerulosa cells of the adrenal cortex to synthesize and secrete aldosterone. Acts by binding to angiotensin receptors AGTR1 and AGTR2. Also binds the DEAR/FBXW7-AS1 receptor. Its function is as follows. Stimulates aldosterone release. Is a ligand for the G-protein coupled receptor MAS1. Has vasodilator and antidiuretic effects. Has an antithrombotic effect that involves MAS1-mediated release of nitric oxide from platelets. This is Angiotensinogen (Agt) from Rattus norvegicus (Rat).